The sequence spans 60 residues: Cytotoxin 10 (60 aa).

Disulfide bonds link Cys-3/Cys-21, Cys-14/Cys-38, Cys-42/Cys-53, and Cys-54/Cys-59.

This sequence belongs to the three-finger toxin family. Short-chain subfamily. Type IA cytotoxin sub-subfamily. As to quaternary structure, monomer in solution; Homodimer and oligomer in the presence of negatively charged lipids forming a pore with a size ranging between 20 and 30 Angstroms. As to expression, expressed by the venom gland.

It localises to the secreted. The protein resides in the target cell membrane. Its function is as follows. Shows cytolytic activity on many different cells by forming pore in lipid membranes. In vivo, increases heart rate or kills the animal by cardiac arrest. In addition, it binds to heparin with high affinity, interacts with Kv channel-interacting protein 1 (KCNIP1) in a calcium-independent manner, and binds to integrin alpha-V/beta-3 (ITGAV/ITGB3) with moderate affinity. This chain is Cytotoxin 10, found in Naja annulifera (Banded Egyptian cobra).